The sequence spans 597 residues: Class E vacuolar protein-sorting machinery protein hse1 (597 aa).

The 130-residue stretch at 16 to 145 (ATDENLTSEN…KLKTQNPNLQ (130 aa)) folds into the VHS domain. Disordered regions lie at residues 140 to 164 (QNPN…QKEE) and 178 to 218 (KPST…QAVP). Residues 151-163 (GKREITEADRQKE) are compositionally biased toward basic and acidic residues. The UIM domain occupies 162–181 (KEEEELQMALALSIREKPST). The segment covering 189-218 (SSASAAAAATTPTGAASAGQAQPAASQAVP) has biased composition (low complexity). The SH3 domain occupies 224–283 (ATVSRVRALFDFQPSEPGELQFRKGDVIAVLESVYKDWWKGSLRGQTGIFPLNYVEKLPD). The tract at residues 380–597 (HPAQPQYGRP…PASNPASFYQ (218 aa)) is disordered. Residues 381–391 (PAQPQYGRPGQ) show a composition bias toward low complexity. Positions 392–410 (PQYPYPGPGAPMGYPPGGP) are enriched in pro residues. Residues 440–450 (PPAAAPYQQAP) are compositionally biased toward low complexity. Residues 471 to 481 (HRPESTYDHPQ) show a composition bias toward basic and acidic residues. Positions 548–560 (NQPPPMHQPPPVP) are enriched in pro residues.

Belongs to the STAM family. Component of the ESCRT-0 complex composed of HSE1 and VPS27.

It localises to the endosome membrane. Functionally, component of the ESCRT-0 complex which is the sorting receptor for ubiquitinated cargo proteins at the multivesicular body (MVB). The sequence is that of Class E vacuolar protein-sorting machinery protein hse1 (hse1) from Aspergillus terreus (strain NIH 2624 / FGSC A1156).